We begin with the raw amino-acid sequence, 719 residues long: Polyribonucleotide nucleotidyltransferase (719 aa).

2 residues coordinate Mg(2+): Asp-491 and Asp-497. A KH domain is found at 558–617; the sequence is PRMLTIKINPEKIRDVIGKGGATIRALTEETGTQIDISDDGTIVIASVDEAQAKEAQRRI. The region spanning 627–695 is the S1 motif domain; that stretch reads GQVYDGSVLR…DKGRLRLSVK (69 aa).

The protein belongs to the polyribonucleotide nucleotidyltransferase family. It depends on Mg(2+) as a cofactor.

It is found in the cytoplasm. It carries out the reaction RNA(n+1) + phosphate = RNA(n) + a ribonucleoside 5'-diphosphate. In terms of biological role, involved in mRNA degradation. Catalyzes the phosphorolysis of single-stranded polyribonucleotides processively in the 3'- to 5'-direction. This Bordetella petrii (strain ATCC BAA-461 / DSM 12804 / CCUG 43448) protein is Polyribonucleotide nucleotidyltransferase.